The chain runs to 333 residues: 4-hydroxy-2-oxovalerate aldolase (333 aa).

Residues 4-254 enclose the Pyruvate carboxyltransferase domain; that stretch reads VKIFDLTLRD…DCGIDLYKTM (251 aa). Position 12 to 13 (12 to 13) interacts with substrate; the sequence is RD. Aspartate 13 is a binding site for Mn(2+). The active-site Proton acceptor is histidine 16. Histidine 193 contributes to the substrate binding site. Mn(2+) is bound by residues histidine 193 and histidine 195. A substrate-binding site is contributed by tyrosine 284.

It belongs to the 4-hydroxy-2-oxovalerate aldolase family.

It catalyses the reaction (S)-4-hydroxy-2-oxopentanoate = acetaldehyde + pyruvate. The sequence is that of 4-hydroxy-2-oxovalerate aldolase from Desulfitobacterium hafniense (strain DSM 10664 / DCB-2).